Consider the following 492-residue polypeptide: Tyrosine--tRNA ligase, mitochondrial (492 aa).

Y89 contributes to the L-tyrosine binding site. D93 is an ATP binding site. The 'HIGH' region signature appears at 94–103 (PTAQSLHLGN). 5 residues coordinate L-tyrosine: D133, Y239, Q243, D246, and Q265. Positions 303–307 (KFGKS) match the 'KMSKS' region motif. K306 is an ATP binding site.

This sequence belongs to the class-I aminoacyl-tRNA synthetase family. In terms of assembly, homodimer.

Its subcellular location is the mitochondrion matrix. It carries out the reaction tRNA(Tyr) + L-tyrosine + ATP = L-tyrosyl-tRNA(Tyr) + AMP + diphosphate + H(+). In terms of biological role, catalyzes the attachment of tyrosine to tRNA(Tyr) in a two-step reaction: tyrosine is first activated by ATP to form Tyr-AMP and then transferred to the acceptor end of tRNA(Tyr). This is Tyrosine--tRNA ligase, mitochondrial (MSY1) from Saccharomyces cerevisiae (strain ATCC 204508 / S288c) (Baker's yeast).